A 463-amino-acid chain; its full sequence is Cysteine--tRNA ligase (463 aa).

C28 contacts Zn(2+). The short motif at 30–40 is the 'HIGH' region element; sequence ITIYDLCHIGH. Residues C209, H234, and E238 each contribute to the Zn(2+) site. Residues 266–270 carry the 'KMSKS' region motif; that stretch reads KMSKS. K269 is a binding site for ATP.

This sequence belongs to the class-I aminoacyl-tRNA synthetase family. As to quaternary structure, monomer. Zn(2+) is required as a cofactor.

Its subcellular location is the cytoplasm. The catalysed reaction is tRNA(Cys) + L-cysteine + ATP = L-cysteinyl-tRNA(Cys) + AMP + diphosphate. This chain is Cysteine--tRNA ligase, found in Proteus mirabilis (strain HI4320).